Here is a 137-residue protein sequence, read N- to C-terminus: ATP synthase epsilon chain, chloroplastic (137 aa).

The protein belongs to the ATPase epsilon chain family. As to quaternary structure, F-type ATPases have 2 components, CF(1) - the catalytic core - and CF(0) - the membrane proton channel. CF(1) has five subunits: alpha(3), beta(3), gamma(1), delta(1), epsilon(1). CF(0) has three main subunits: a, b and c.

It localises to the plastid. It is found in the chloroplast thylakoid membrane. Functionally, produces ATP from ADP in the presence of a proton gradient across the membrane. The chain is ATP synthase epsilon chain, chloroplastic from Sorghum bicolor (Sorghum).